The sequence spans 188 residues: Elongation factor P (188 aa).

The protein belongs to the elongation factor P family.

It localises to the cytoplasm. It functions in the pathway protein biosynthesis; polypeptide chain elongation. In terms of biological role, involved in peptide bond synthesis. Stimulates efficient translation and peptide-bond synthesis on native or reconstituted 70S ribosomes in vitro. Probably functions indirectly by altering the affinity of the ribosome for aminoacyl-tRNA, thus increasing their reactivity as acceptors for peptidyl transferase. The sequence is that of Elongation factor P from Leptospira borgpetersenii serovar Hardjo-bovis (strain JB197).